Consider the following 255-residue polypeptide: Aliphatic sulfonates import ATP-binding protein SsuB (255 aa).

One can recognise an ABC transporter domain in the interval 12 to 233 (LLLNAVSKHY…RLGSVRLAEL (222 aa)). Residue 44 to 51 (GRSGGGKS) participates in ATP binding.

This sequence belongs to the ABC transporter superfamily. Aliphatic sulfonates importer (TC 3.A.1.17.2) family. In terms of assembly, the complex is composed of two ATP-binding proteins (SsuB), two transmembrane proteins (SsuC) and a solute-binding protein (SsuA).

The protein localises to the cell inner membrane. It catalyses the reaction ATP + H2O + aliphatic sulfonate-[sulfonate-binding protein]Side 1 = ADP + phosphate + aliphatic sulfonateSide 2 + [sulfonate-binding protein]Side 1.. Its function is as follows. Part of the ABC transporter complex SsuABC involved in aliphatic sulfonates import. Responsible for energy coupling to the transport system. The polypeptide is Aliphatic sulfonates import ATP-binding protein SsuB (Escherichia coli O1:K1 / APEC).